The sequence spans 374 residues: Chaperone protein DnaJ (374 aa).

A J domain is found at 4-69 (SYYEILEITQ…EKRAIYDRYG (66 aa)). A CR-type zinc finger spans residues 136-213 (GCKKNIDFTY…CKGLGYNESK (78 aa)). Zn(2+) is bound by residues Cys-149, Cys-152, Cys-165, Cys-168, Cys-187, Cys-190, Cys-201, and Cys-204. 4 CXXCXGXG motif repeats span residues 149–156 (CKTCNGTG), 165–172 (CPKCQGRG), 187–194 (CPDCQGSG), and 201–208 (CSDCKGLG).

It belongs to the DnaJ family. Homodimer. Zn(2+) is required as a cofactor.

Its subcellular location is the cytoplasm. Functionally, participates actively in the response to hyperosmotic and heat shock by preventing the aggregation of stress-denatured proteins and by disaggregating proteins, also in an autonomous, DnaK-independent fashion. Unfolded proteins bind initially to DnaJ; upon interaction with the DnaJ-bound protein, DnaK hydrolyzes its bound ATP, resulting in the formation of a stable complex. GrpE releases ADP from DnaK; ATP binding to DnaK triggers the release of the substrate protein, thus completing the reaction cycle. Several rounds of ATP-dependent interactions between DnaJ, DnaK and GrpE are required for fully efficient folding. Also involved, together with DnaK and GrpE, in the DNA replication of plasmids through activation of initiation proteins. The protein is Chaperone protein DnaJ of Campylobacter jejuni subsp. jejuni serotype O:6 (strain 81116 / NCTC 11828).